A 425-amino-acid polypeptide reads, in one-letter code: [Pyruvate dehydrogenase (acetyl-transferring)] kinase, mitochondrial (425 aa).

H178 carries the phosphohistidine; by autocatalysis modification. The region spanning 180-418 is the Histidine kinase domain; that stretch reads NVAVEIALDI…DVYIHLNRLC (239 aa). Residues 296 to 303, D336, 355 to 356, and 379 to 384 each bind ATP; these read EILKNSLR, TT, and GFGFGL.

This sequence belongs to the PDK/BCKDK protein kinase family.

It localises to the mitochondrion matrix. It carries out the reaction L-seryl-[pyruvate dehydrogenase E1 alpha subunit] + ATP = O-phospho-L-seryl-[pyruvate dehydrogenase E1 alpha subunit] + ADP + H(+). Functionally, inhibits the mitochondrial pyruvate dehydrogenase complex by phosphorylation of the E1 alpha subunit, thus contributing to the regulation of glucose metabolism. This Schizosaccharomyces pombe (strain 972 / ATCC 24843) (Fission yeast) protein is [Pyruvate dehydrogenase (acetyl-transferring)] kinase, mitochondrial (pkp1).